The following is a 157-amino-acid chain: Transcription elongation factor GreA (157 aa).

Residues Leu-14–Glu-37 adopt a coiled-coil conformation.

The protein belongs to the GreA/GreB family.

Its function is as follows. Necessary for efficient RNA polymerase transcription elongation past template-encoded arresting sites. The arresting sites in DNA have the property of trapping a certain fraction of elongating RNA polymerases that pass through, resulting in locked ternary complexes. Cleavage of the nascent transcript by cleavage factors such as GreA or GreB allows the resumption of elongation from the new 3'terminus. GreA releases sequences of 2 to 3 nucleotides. This chain is Transcription elongation factor GreA, found in Vibrio cholerae serotype O1 (strain ATCC 39315 / El Tor Inaba N16961).